Consider the following 699-residue polypeptide: Elongation factor G (699 aa).

The 276-residue stretch at 8 to 283 folds into the tr-type G domain; sequence EHIRNIGICA…AVVDFLPSPI (276 aa). Residues 17–24, 81–85, and 135–138 contribute to the GTP site; these read AHIDAGKT, DTPGH, and NKMD.

It belongs to the TRAFAC class translation factor GTPase superfamily. Classic translation factor GTPase family. EF-G/EF-2 subfamily.

Its subcellular location is the cytoplasm. Catalyzes the GTP-dependent ribosomal translocation step during translation elongation. During this step, the ribosome changes from the pre-translocational (PRE) to the post-translocational (POST) state as the newly formed A-site-bound peptidyl-tRNA and P-site-bound deacylated tRNA move to the P and E sites, respectively. Catalyzes the coordinated movement of the two tRNA molecules, the mRNA and conformational changes in the ribosome. In Rickettsia rickettsii (strain Iowa), this protein is Elongation factor G.